The primary structure comprises 173 residues: Protein GrpE (173 aa).

Over residues 1 to 28 (MTEEEKTKSEAEEIEQNNKEEEQEKSVE) the composition is skewed to basic and acidic residues. The interval 1 to 30 (MTEEEKTKSEAEEIEQNNKEEEQEKSVEEL) is disordered.

This sequence belongs to the GrpE family. As to quaternary structure, homodimer.

The protein localises to the cytoplasm. Participates actively in the response to hyperosmotic and heat shock by preventing the aggregation of stress-denatured proteins, in association with DnaK and GrpE. It is the nucleotide exchange factor for DnaK and may function as a thermosensor. Unfolded proteins bind initially to DnaJ; upon interaction with the DnaJ-bound protein, DnaK hydrolyzes its bound ATP, resulting in the formation of a stable complex. GrpE releases ADP from DnaK; ATP binding to DnaK triggers the release of the substrate protein, thus completing the reaction cycle. Several rounds of ATP-dependent interactions between DnaJ, DnaK and GrpE are required for fully efficient folding. This Methanosphaera stadtmanae (strain ATCC 43021 / DSM 3091 / JCM 11832 / MCB-3) protein is Protein GrpE.